We begin with the raw amino-acid sequence, 275 residues long: Large ribosomal subunit protein uL2 (275 aa).

A disordered region spans residues 216–275 (GIRPQTRGSAMNPIDHPHGGGEGKTNSGRHPVTPWGMPTKGYKTRKKKASDKLIISKRKK). The segment covering 257 to 275 (YKTRKKKASDKLIISKRKK) has biased composition (basic residues).

It belongs to the universal ribosomal protein uL2 family. Part of the 50S ribosomal subunit. Forms a bridge to the 30S subunit in the 70S ribosome.

Functionally, one of the primary rRNA binding proteins. Required for association of the 30S and 50S subunits to form the 70S ribosome, for tRNA binding and peptide bond formation. It has been suggested to have peptidyltransferase activity; this is somewhat controversial. Makes several contacts with the 16S rRNA in the 70S ribosome. The protein is Large ribosomal subunit protein uL2 of Aliarcobacter butzleri (strain RM4018) (Arcobacter butzleri).